The chain runs to 196 residues: Protein hunchback (196 aa).

Disordered regions lie at residues 16–60 (SHHH…NTNL) and 90–196 (AMTP…KYMA). Residues 17–30 (HHHHHHHAHHSYHQ) are compositionally biased toward basic residues. Positions 92 to 103 (TPSSSNNDQNSP) are enriched in polar residues. Over residues 125–144 (PTATTTTTPAAAAPTTTAAT) the composition is skewed to low complexity. A compositionally biased stretch (basic and acidic residues) spans 176–196 (AEREKEHDLMSNSSEDMKYMA).

This sequence belongs to the hunchback C2H2-type zinc-finger protein family.

It is found in the nucleus. Its function is as follows. Gap class segmentation protein that controls development of head structures. This Drosophila silvestris (Fruit fly) protein is Protein hunchback (hb).